Here is a 244-residue protein sequence, read N- to C-terminus: Transcriptional activator protein FnrA (244 aa).

The HTH crp-type domain maps to 159-232; it reads KTADERIATF…GKEVRILDSI (74 aa). The segment at residues 192–211 is a DNA-binding region (H-T-H motif); sequence RNEIGNYLGLAVETVSRVFT.

Its function is as follows. Transcriptional regulator of arginine deiminase. The chain is Transcriptional activator protein FnrA (fnrA) from Stutzerimonas stutzeri (Pseudomonas stutzeri).